Reading from the N-terminus, the 399-residue chain is Lipase member K (399 aa).

A signal peptide spans 1–19 (MWQLLAAACWMLLLGSMYG). In terms of domain architecture, AB hydrolase-1 spans 78 to 378 (PAVYLQHGLI…HYNHVDFYLG (301 aa)). Serine 172 acts as the Nucleophile in catalysis. Residues cysteine 246 and cysteine 255 are joined by a disulfide bond. Asparagine 271 and asparagine 327 each carry an N-linked (GlcNAc...) asparagine glycan. Active-site charge relay system residues include aspartate 343 and histidine 372.

The protein belongs to the AB hydrolase superfamily. Lipase family. In terms of tissue distribution, exclusively expressed in the epidermis within the granular keratinocytes.

The protein localises to the secreted. Functionally, plays a highly specific role in the last step of keratinocyte differentiation. May have an essential function in lipid metabolism of the most differentiated epidermal layers. In Homo sapiens (Human), this protein is Lipase member K (LIPK).